Consider the following 372-residue polypeptide: Protein Wnt-1 (372 aa).

A signal peptide spans 1-29 (MLKSTQVILIFILLISIVESLSWLALGLA). 3 disulfides stabilise this stretch: Cys-77–Cys-88, Cys-130–Cys-138, and Cys-140–Cys-158. N-linked (GlcNAc...) asparagine glycosylation is present at Asn-87. Asn-187 carries an N-linked (GlcNAc...) asparagine glycan. 8 cysteine pairs are disulfide-bonded: Cys-225/Cys-239, Cys-227/Cys-234, Cys-301/Cys-332, Cys-317/Cys-327, Cys-331/Cys-371, Cys-347/Cys-362, Cys-349/Cys-359, and Cys-354/Cys-355. Ser-231 carries O-palmitoleoyl serine; by mom-1 lipidation.

Belongs to the Wnt family. Palmitoleoylation is required for efficient binding to frizzled receptors. Depalmitoleoylation leads to Wnt signaling pathway inhibition. As to expression, expressed in intestine, some head neurons and ventral nerve cord and pharyngeal neurons. Expressed in the tail and weakly expressed in the vulva and body wall muscles. Expressed highly in posterior dorsal and ventral muscle cells.

It localises to the secreted. The protein resides in the extracellular space. It is found in the extracellular matrix. Its subcellular location is the cytoplasm. The protein localises to the cell membrane. Its function is as follows. Ligand for members of the frizzled family of seven transmembrane receptors. Probable developmental protein. May be a signaling molecule which affects the development of discrete regions of tissues. Is likely to signal over only few cell diameters. Binds receptor tyrosine kinase cam-1. Together with Wnt ligand cwn-2, regulates the migration of CAN, ALM, BDU and HSN neurons during embryogenesis, the migration of QL and QR neuroblast descendants during larval development, and polarity of ALM neurons. Also acts with the Wnt ligand egl-20 to direct HSN neuron migration. Acts through the Wnt receptor cfz-2 to direct ALM migration. Also plays a role in axon growth and guidance in HSN and male CP neurons. In addition, together with Wnt ligand cwn-2, negatively regulates developmental neurite pruning of AIM neurons probably by acting as a ligand for receptor tyrosine kinase cam-1. Probably by activating the Wnt/Frizzled pathway, may regulate vulva development. May act redundantly with other Wnt ligands such as cwn-2 and mom-2 to control seam cell polarity. This Caenorhabditis elegans protein is Protein Wnt-1 (cwn-1).